The primary structure comprises 371 residues: DNA-directed RNA polymerase subunit alpha (371 aa).

An alpha N-terminal domain (alpha-NTD) region spans residues 1–248 (MSVKYGKFEM…KHFEVFNQFN (248 aa)). Positions 264–371 (DQDELMDKLS…KELVKHEDAK (108 aa)) are alpha C-terminal domain (alpha-CTD).

It belongs to the RNA polymerase alpha chain family. In terms of assembly, homodimer. The RNAP catalytic core consists of 2 alpha, 1 beta, 1 beta' and 1 omega subunit. When a sigma factor is associated with the core the holoenzyme is formed, which can initiate transcription.

The enzyme catalyses RNA(n) + a ribonucleoside 5'-triphosphate = RNA(n+1) + diphosphate. Its function is as follows. DNA-dependent RNA polymerase catalyzes the transcription of DNA into RNA using the four ribonucleoside triphosphates as substrates. This chain is DNA-directed RNA polymerase subunit alpha, found in Protochlamydia amoebophila (strain UWE25).